The sequence spans 359 residues: Peptide chain release factor 1 (359 aa).

Glutamine 236 bears the N5-methylglutamine mark.

The protein belongs to the prokaryotic/mitochondrial release factor family. Methylated by PrmC. Methylation increases the termination efficiency of RF1.

The protein resides in the cytoplasm. Its function is as follows. Peptide chain release factor 1 directs the termination of translation in response to the peptide chain termination codons UAG and UAA. The protein is Peptide chain release factor 1 of Streptococcus pyogenes serotype M18 (strain MGAS8232).